The following is a 107-amino-acid chain: U1-lycotoxin-Ls1x (107 aa).

The N-terminal stretch at 1–20 (MMKVLVVVALLVTLISYSSS) is a signal peptide. Residues 21 to 41 (EGIDDLEADELLSLMANEHPR) constitute a propeptide that is removed on maturation. 4 disulfides stabilise this stretch: Cys-44/Cys-59, Cys-51/Cys-68, Cys-58/Cys-86, and Cys-70/Cys-84.

Belongs to the neurotoxin 19 (CSTX) family. 04 (U1-Lctx) subfamily. As to expression, expressed by the venom gland.

It is found in the secreted. The protein is U1-lycotoxin-Ls1x of Lycosa singoriensis (Wolf spider).